A 482-amino-acid chain; its full sequence is UDP-N-acetylmuramate--L-alanine ligase (482 aa).

129–135 serves as a coordination point for ATP; sequence GTHGKTT.

It belongs to the MurCDEF family.

It is found in the cytoplasm. It carries out the reaction UDP-N-acetyl-alpha-D-muramate + L-alanine + ATP = UDP-N-acetyl-alpha-D-muramoyl-L-alanine + ADP + phosphate + H(+). The protein operates within cell wall biogenesis; peptidoglycan biosynthesis. In terms of biological role, cell wall formation. The protein is UDP-N-acetylmuramate--L-alanine ligase of Acinetobacter baumannii (strain SDF).